A 41-amino-acid chain; its full sequence is MQDVKTYLSTAPVLATLWFGFLAGLLIEINRFFPDALVLPL.

The helical transmembrane segment at 7-27 (YLSTAPVLATLWFGFLAGLLI) threads the bilayer.

Belongs to the PsaJ family.

The protein resides in the plastid. The protein localises to the chloroplast thylakoid membrane. Functionally, may help in the organization of the PsaE and PsaF subunits. In Physcomitrium patens (Spreading-leaved earth moss), this protein is Photosystem I reaction center subunit IX.